A 225-amino-acid chain; its full sequence is Cytidylate kinase (225 aa).

11-19 is an ATP binding site; it reads GPAAAGKST.

It belongs to the cytidylate kinase family. Type 1 subfamily.

The protein localises to the cytoplasm. It carries out the reaction CMP + ATP = CDP + ADP. It catalyses the reaction dCMP + ATP = dCDP + ADP. This chain is Cytidylate kinase, found in Bacillus cytotoxicus (strain DSM 22905 / CIP 110041 / 391-98 / NVH 391-98).